We begin with the raw amino-acid sequence, 185 residues long: Ribosome-recycling factor (185 aa).

Belongs to the RRF family.

The protein localises to the cytoplasm. Its function is as follows. Responsible for the release of ribosomes from messenger RNA at the termination of protein biosynthesis. May increase the efficiency of translation by recycling ribosomes from one round of translation to another. In Wigglesworthia glossinidia brevipalpis, this protein is Ribosome-recycling factor.